The following is a 44-amino-acid chain: Photosystem I reaction center subunit IX (44 aa).

Residues 7–27 (YLSTAPVLATLWFGSLAGLLI) traverse the membrane as a helical segment.

Belongs to the PsaJ family.

It localises to the plastid. The protein resides in the chloroplast thylakoid membrane. Its function is as follows. May help in the organization of the PsaE and PsaF subunits. In Calycanthus floridus var. glaucus (Eastern sweetshrub), this protein is Photosystem I reaction center subunit IX.